A 256-amino-acid polypeptide reads, in one-letter code: Pyrroloquinoline-quinone synthase (256 aa).

This sequence belongs to the PqqC family.

It catalyses the reaction 6-(2-amino-2-carboxyethyl)-7,8-dioxo-1,2,3,4,7,8-hexahydroquinoline-2,4-dicarboxylate + 3 O2 = pyrroloquinoline quinone + 2 H2O2 + 2 H2O + H(+). It functions in the pathway cofactor biosynthesis; pyrroloquinoline quinone biosynthesis. Functionally, ring cyclization and eight-electron oxidation of 3a-(2-amino-2-carboxyethyl)-4,5-dioxo-4,5,6,7,8,9-hexahydroquinoline-7,9-dicarboxylic-acid to PQQ. The protein is Pyrroloquinoline-quinone synthase of Rhizobium meliloti (strain 1021) (Ensifer meliloti).